A 719-amino-acid polypeptide reads, in one-letter code: Protein psiI (719 aa).

The N-terminal stretch at 1-19 (MKIIFNLLILFSLVNFINS) is a signal peptide. Topologically, residues 20-658 (QSTTQATTLK…ICQTGAIVST (639 aa)) are extracellular. N-linked (GlcNAc...) asparagine glycosylation is found at Asn-62, Asn-105, Asn-118, Asn-151, Asn-315, Asn-379, Asn-454, Asn-488, Asn-500, Asn-538, Asn-592, and Asn-629. Positions 119-261 (LTLNPSTGTY…YDYCGVCYGD (143 aa)) constitute a PA14 domain. The chain crosses the membrane as a helical span at residues 659 to 679 (AVVASVVVVGAVVLGAAIFAG). Residues 680 to 719 (KKGYDHWKANQGQVFASSNANPLYQQSNNGGENALFEAPQ) lie on the Cytoplasmic side of the membrane.

This sequence belongs to the prespore-cell-inducing factor family.

The protein resides in the membrane. This chain is Protein psiI (psiI), found in Dictyostelium discoideum (Social amoeba).